The following is a 283-amino-acid chain: ATP synthase gamma chain (283 aa).

The protein belongs to the ATPase gamma chain family. F-type ATPases have 2 components, CF(1) - the catalytic core - and CF(0) - the membrane proton channel. CF(1) has five subunits: alpha(3), beta(3), gamma(1), delta(1), epsilon(1). CF(0) has three main subunits: a, b and c.

The protein localises to the cell membrane. Its function is as follows. Produces ATP from ADP in the presence of a proton gradient across the membrane. The gamma chain is believed to be important in regulating ATPase activity and the flow of protons through the CF(0) complex. This chain is ATP synthase gamma chain, found in Clostridium botulinum (strain Eklund 17B / Type B).